We begin with the raw amino-acid sequence, 160 residues long: Transcriptional repressor NrdR (160 aa).

The segment at 3-34 (CPFCRHADTQVVDSRVSEDGATIRRRRRCPAC) is a zinc-finger region. Residues 49-139 (PSVVKKDGSR…VYRRFEDVSE (91 aa)) enclose the ATP-cone domain.

Belongs to the NrdR family. Zn(2+) serves as cofactor.

In terms of biological role, negatively regulates transcription of bacterial ribonucleotide reductase nrd genes and operons by binding to NrdR-boxes. The protein is Transcriptional repressor NrdR of Paraburkholderia phytofirmans (strain DSM 17436 / LMG 22146 / PsJN) (Burkholderia phytofirmans).